Reading from the N-terminus, the 259-residue chain is Flap endonuclease Xni (259 aa).

Asp109 serves as a coordination point for Mg(2+). In terms of domain architecture, 5'-3' exonuclease spans 165–255; that stretch reads VTPAQLTDYW…FNLQDIRFNS (91 aa). Residues Leu176, Pro185, Val187, and Ile190 each contribute to the K(+) site. The interval 189 to 194 is interaction with DNA; the sequence is GIGPKA.

This sequence belongs to the Xni family. Mg(2+) serves as cofactor. It depends on K(+) as a cofactor.

Has flap endonuclease activity. During DNA replication, flap endonucleases cleave the 5'-overhanging flap structure that is generated by displacement synthesis when DNA polymerase encounters the 5'-end of a downstream Okazaki fragment. In Vibrio cholerae serotype O1 (strain ATCC 39315 / El Tor Inaba N16961), this protein is Flap endonuclease Xni.